A 505-amino-acid polypeptide reads, in one-letter code: RNA-splicing ligase RtcB homolog (505 aa).

Positions 119, 122, 227, and 259 each coordinate Mn(2+). 226-230 (NHYAE) is a GMP binding site. S300 is subject to Phosphoserine. Residue H353 coordinates Mn(2+). GMP is bound by residues 353–354 (HN), 402–405 (GGTM), S409, and 428–431 (HGAG). H428 functions as the GMP-histidine intermediate in the catalytic mechanism. Residue K496 forms a Glycyl lysine isopeptide (Lys-Gly) (interchain with G-Cter in SUMO2) linkage. A GMP-binding site is contributed by K504.

Belongs to the RtcB family. As to quaternary structure, catalytic component of the tRNA-splicing ligase complex. It depends on Mn(2+) as a cofactor.

The protein localises to the nucleus. It is found in the cytoplasm. The catalysed reaction is a 3'-end 3'-phospho-ribonucleotide-RNA + a 5'-end dephospho-ribonucleoside-RNA + GTP = a ribonucleotidyl-ribonucleotide-RNA + GMP + diphosphate. It carries out the reaction a 3'-end 2',3'-cyclophospho-ribonucleotide-RNA + a 5'-end dephospho-ribonucleoside-RNA + GTP + H2O = a ribonucleotidyl-ribonucleotide-RNA + GMP + diphosphate + H(+). Catalytic subunit of the tRNA-splicing ligase complex that acts by directly joining spliced tRNA halves to mature-sized tRNAs by incorporating the precursor-derived splice junction phosphate into the mature tRNA as a canonical 3',5'-phosphodiester. May act as an RNA ligase with broad substrate specificity, and may function toward other RNAs. This chain is RNA-splicing ligase RtcB homolog, found in Rattus norvegicus (Rat).